Consider the following 293-residue polypeptide: Small ribosomal subunit protein uS3 (293 aa).

A KH type-2 domain is found at valine 39–arginine 107. Residues arginine 210 to glutamate 293 are disordered. The segment covering proline 219–glycine 238 has biased composition (basic and acidic residues).

This sequence belongs to the universal ribosomal protein uS3 family. Part of the 30S ribosomal subunit. Forms a tight complex with proteins S10 and S14.

In terms of biological role, binds the lower part of the 30S subunit head. Binds mRNA in the 70S ribosome, positioning it for translation. The chain is Small ribosomal subunit protein uS3 from Paracidovorax citrulli (strain AAC00-1) (Acidovorax citrulli).